Reading from the N-terminus, the 364-residue chain is Delta(7)-sterol 5(6)-desaturase (364 aa).

Transmembrane regions (helical) follow at residues F94 to S114, L142 to L162, and K181 to H201. Residues T188–G312 form the Fatty acid hydroxylase domain. The Histidine box-1 signature appears at H201–H205. A Histidine box-2 motif is present at residues H214–H218. Residues I249–V269 form a helical membrane-spanning segment. The short motif at H289–H293 is the Histidine box-3 element.

This sequence belongs to the sterol desaturase family. Requires Fe cation as cofactor.

It is found in the endoplasmic reticulum membrane. The catalysed reaction is a Delta(7)-sterol + 2 Fe(II)-[cytochrome b5] + O2 + 2 H(+) = a Delta(5),Delta(7)-sterol + 2 Fe(III)-[cytochrome b5] + 2 H2O. Its pathway is steroid metabolism; ergosterol biosynthesis; ergosterol from zymosterol: step 3/5. Catalyzes the introduction of a C-5 double bond in the B ring of ergosterol. May contribute to the regulation of ergosterol biosynthesis. This Candida glabrata (strain ATCC 2001 / BCRC 20586 / JCM 3761 / NBRC 0622 / NRRL Y-65 / CBS 138) (Yeast) protein is Delta(7)-sterol 5(6)-desaturase (ERG3).